A 609-amino-acid chain; its full sequence is UvrABC system protein C (609 aa).

The GIY-YIG domain occupies 16–94 (SSPGVYRMYD…IKQYMPKYNV (79 aa)). In terms of domain architecture, UVR spans 203 to 238 (QQVMSVLVQKMEQASSDMRYEQAALYRDQITALRRV).

It belongs to the UvrC family. As to quaternary structure, interacts with UvrB in an incision complex.

The protein localises to the cytoplasm. Its function is as follows. The UvrABC repair system catalyzes the recognition and processing of DNA lesions. UvrC both incises the 5' and 3' sides of the lesion. The N-terminal half is responsible for the 3' incision and the C-terminal half is responsible for the 5' incision. This chain is UvrABC system protein C, found in Shewanella pealeana (strain ATCC 700345 / ANG-SQ1).